Consider the following 848-residue polypeptide: Protein translocase subunit SecA (848 aa).

ATP-binding positions include Q86, 104–108 (GEGKT), and D508. Zn(2+) contacts are provided by C833, C835, C844, and C845.

This sequence belongs to the SecA family. In terms of assembly, monomer and homodimer. Part of the essential Sec protein translocation apparatus which comprises SecA, SecYEG and auxiliary proteins SecDF. Other proteins may also be involved. The cofactor is Zn(2+).

It is found in the cell membrane. The protein localises to the cytoplasm. It carries out the reaction ATP + H2O + cellular proteinSide 1 = ADP + phosphate + cellular proteinSide 2.. Functionally, part of the Sec protein translocase complex. Interacts with the SecYEG preprotein conducting channel. Has a central role in coupling the hydrolysis of ATP to the transfer of proteins into and across the cell membrane, serving as an ATP-driven molecular motor driving the stepwise translocation of polypeptide chains across the membrane. This is Protein translocase subunit SecA from Caldicellulosiruptor saccharolyticus (strain ATCC 43494 / DSM 8903 / Tp8T 6331).